A 653-amino-acid polypeptide reads, in one-letter code: Hepatocyte growth factor activator serine protease (653 aa).

The first 34 residues, 1-34, serve as a signal peptide directing secretion; sequence MGRQAWISSLCPLPRPCPFLLLLLLLVVPRGAQP. The segment at 34-98 is disordered; it reads PQAGRNHTEP…SSSPPGGQVL (65 aa). Positions 35–369 are cleaved as a propeptide — removed in mature form; the sequence is QAGRNHTEPP…RLTACESLAR (335 aa). 3 N-linked (GlcNAc...) asparagine glycosylation sites follow: Asn39, Asn47, and Asn63. Positions 47-59 are enriched in low complexity; that stretch reads NVTATPVTPTIPV. The 48-residue stretch at 100–147 folds into the Fibronectin type-II domain; sequence ESGQPCRFPFRYGGRMLHSCTSEGSAYRKWCATTHNYDRDRAWGYCAE. Intrachain disulfides connect Cys105–Cys130, Cys119–Cys145, Cys161–Cys172, Cys166–Cys183, Cys185–Cys194, Cys199–Cys227, Cys225–Cys234, Cys242–Cys253, Cys247–Cys264, Cys266–Cys275, Cys283–Cys364, Cys304–Cys346, Cys335–Cys359, Cys392–Cys519, Cys430–Cys446, Cys438–Cys508, Cys533–Cys602, Cys565–Cys581, and Cys592–Cys620. An EGF-like 1 domain is found at 157-195; the sequence is ILDPCASGPCLNGGTCSSTHDHGSYHCSCPLAFTGKDCG. Residues 197-237 enclose the Fibronectin type-I domain; that stretch reads EKCFDETRYEYFEVGDHWARVSEGHVEQCGCMEGQARCEDT. In terms of domain architecture, EGF-like 2 spans 238–276; that stretch reads HHTACLSSPCLNGGTCHLIVGTGTSVCTCPLGYAGRFCN. The Kringle domain occupies 283–364; sequence CFLGNGTEYR…SWEYCRLTAC (82 aa). Asn287 carries N-linked (GlcNAc...) asparagine glycosylation. In terms of domain architecture, Peptidase S1 spans 406-644; sequence IIGGSSSLPG…YVDWINDRIR (239 aa). His445 (charge relay system) is an active-site residue. A glycan (N-linked (GlcNAc...) asparagine) is linked at Asn466. Asp495 acts as the Charge relay system in catalysis. Asn544 carries an N-linked (GlcNAc...) asparagine glycan. Ser596 functions as the Charge relay system in the catalytic mechanism.

Belongs to the peptidase S1 family. In terms of assembly, heterodimer of a short chain and a long chain linked by a disulfide bond. The active form of HGFAC presents in the serum is derived from the COOH-terminal region of the precursor by the cleavage of bonds between Arg-369 and Val-370 and Arg-405 and Ile-406.

Its subcellular location is the secreted. Functionally, serine protease that hydrolyzes the inactive zymogen hepatocyte growth factor (HGFsc) to an activated disulfide-linked heterodimer, then initiating hepatocyte growth factor receptor signaling pathway. The chain is Hepatocyte growth factor activator serine protease from Mus musculus (Mouse).